Consider the following 147-residue polypeptide: Mitochondrial import receptor subunit TOM20 homolog (147 aa).

Topologically, residues 1-3 (MVA) are mitochondrial intermembrane. A helical transmembrane segment spans residues 4-26 (VGKTSAIAAGVCGALLLGYCIYF). Topologically, residues 27–147 (DRKRRSDPNF…AQNLSEDDVE (121 aa)) are cytoplasmic.

It belongs to the Tom20 family. In terms of assembly, forms part of the preprotein translocase complex of the outer mitochondrial membrane (TOM complex). Interacts with tom22.

The protein resides in the mitochondrion outer membrane. Functionally, central component of the receptor complex responsible for the recognition and translocation of cytosolically synthesized mitochondrial preproteins. Together with tom22 functions as the transit peptide receptor at the surface of the mitochondrion outer membrane and facilitates the movement of preproteins into the tom40 translocation pore. The chain is Mitochondrial import receptor subunit TOM20 homolog (tomm20) from Xenopus laevis (African clawed frog).